The following is a 263-amino-acid chain: Acidic leucine-rich nuclear phosphoprotein 32 family member E (263 aa).

3 LRR repeats span residues 43 to 64, 65 to 84, and 89 to 110; these read ELEFLSMANVELKSLSKLPKLP, KLRKLELSDNSISGGLDVLT, and NITYLNLSGNKIKDLSTVEALA. The 39-residue stretch at 123–161 folds into the LRRCT domain; it reads CEITNLEDYRENIFQRLSQITYLDGFDQEDNEAPDSEED. Positions 146–263 are disordered; sequence DGFDQEDNEA…PEDEGDEDED (118 aa). Acidic residues-rich tracts occupy residues 148-172, 180-203, and 214-242; these read FDQEDNEAPDSEEDDDDDDYDDDEE, AEEDEEDEESASDLGEEEEEEEEV, and RDEEDDDDYVEDGAEGEEEEEEDEEDEAA. The interval 202-263 is ZID domain; it reads EVGLSYLMKE…PEDEGDEDED (62 aa).

The protein belongs to the ANP32 family. In terms of assembly, component of a SWR1-like complex. Interacts with H2A.Z/H2AZ1. Post-translationally, phosphorylated. The phosphorylation is nuclear localization signal (NLS)-dependent.

The protein resides in the cytoplasm. The protein localises to the nucleus. Histone chaperone that specifically mediates the genome-wide removal of histone H2A.Z/H2AZ1 from the nucleosome: removes H2A.Z/H2AZ1 from its normal sites of deposition, especially from enhancer and insulator regions. Not involved in deposition of H2A.Z/H2AZ1 in the nucleosome. May stabilize the evicted H2A.Z/H2AZ1-H2B dimer, thus shifting the equilibrium towards dissociation and the off-chromatin state. Inhibits activity of protein phosphatase 2A (PP2A). Does not inhibit protein phosphatase 1. May play a role in cerebellar development and synaptogenesis. This Xenopus laevis (African clawed frog) protein is Acidic leucine-rich nuclear phosphoprotein 32 family member E (anp32e).